Reading from the N-terminus, the 263-residue chain is Ycf3-interacting protein 1, chloroplastic (263 aa).

Residues 1 to 71 (MASNMLQLSL…VNKEEDSATY (71 aa)) constitute a chloroplast transit peptide. The chain crosses the membrane as a helical span at residues 238–258 (ALYLVSAFPIIIGISVVLILF).

It belongs to the Y3IP1/CEST family. Interacts with Ycf3.

Its subcellular location is the plastid. It localises to the chloroplast thylakoid membrane. Its function is as follows. Nuclear genome-encoded factor that participates in photosystem I (PSI) biogenesis. Cooperates with the plastid genome-encoded protein PSI assembly Ycf3 in the assembly of stable PSI units in the thylakoid membrane. In Nicotiana tabacum (Common tobacco), this protein is Ycf3-interacting protein 1, chloroplastic.